We begin with the raw amino-acid sequence, 194 residues long: Flavin prenyltransferase UbiX (194 aa).

FMN is bound by residues 9-11 (GAS), Ser-35, 86-89 (SIKT), and Arg-121. Dimethylallyl phosphate-binding residues include Tyr-151 and Lys-167.

It belongs to the UbiX/PAD1 family.

The enzyme catalyses dimethylallyl phosphate + FMNH2 = prenylated FMNH2 + phosphate. Its function is as follows. Involved in the carboxylation of phenylphosphate. In terms of biological role, flavin prenyltransferase that catalyzes the synthesis of the prenylated FMN cofactor (prenyl-FMN) for 4-hydroxy-3-polyprenylbenzoic acid decarboxylase UbiD. The prenyltransferase is metal-independent and links a dimethylallyl moiety from dimethylallyl monophosphate (DMAP) to the flavin N5 and C6 atoms of FMN. The polypeptide is Flavin prenyltransferase UbiX (Thauera aromatica).